We begin with the raw amino-acid sequence, 472 residues long: Glycine--tRNA ligase (472 aa).

2 residues coordinate substrate: Arg109 and Glu174. ATP is bound by residues 206–208 (RNE), 216–221 (FRTREF), 293–294 (EL), and 337–340 (GLTR). A substrate-binding site is contributed by 221 to 225 (FEQME). 333–337 (EPAAG) contacts substrate.

Belongs to the class-II aminoacyl-tRNA synthetase family. In terms of assembly, homodimer.

The protein resides in the cytoplasm. It carries out the reaction tRNA(Gly) + glycine + ATP = glycyl-tRNA(Gly) + AMP + diphosphate. In terms of biological role, catalyzes the attachment of glycine to tRNA(Gly). This Cutibacterium acnes (strain DSM 16379 / KPA171202) (Propionibacterium acnes) protein is Glycine--tRNA ligase.